A 307-amino-acid chain; its full sequence is Protoheme IX farnesyltransferase (307 aa).

8 consecutive transmembrane segments (helical) span residues 24-44 (ISLL…VGLV), 52-72 (PVIA…AGAL), 115-135 (VVLG…TIFF), 152-172 (IVIG…AASG), 179-199 (VILV…LSLY), 224-244 (QILL…MLGE), 245-265 (AGLA…LLAV), and 284-304 (FGFS…EALV).

Belongs to the UbiA prenyltransferase family. Protoheme IX farnesyltransferase subfamily.

It is found in the cell inner membrane. It carries out the reaction heme b + (2E,6E)-farnesyl diphosphate + H2O = Fe(II)-heme o + diphosphate. It functions in the pathway porphyrin-containing compound metabolism; heme O biosynthesis; heme O from protoheme: step 1/1. In terms of biological role, converts heme B (protoheme IX) to heme O by substitution of the vinyl group on carbon 2 of heme B porphyrin ring with a hydroxyethyl farnesyl side group. The polypeptide is Protoheme IX farnesyltransferase (Azorhizobium caulinodans (strain ATCC 43989 / DSM 5975 / JCM 20966 / LMG 6465 / NBRC 14845 / NCIMB 13405 / ORS 571)).